We begin with the raw amino-acid sequence, 74 residues long: MAVFEKVQEIIVEELGKDASEVTLESTFDDLDADSLDLFQVISEIEDAFDIQIEAENDLKTVGDLVAYVEEQAK.

One can recognise a Carrier domain in the interval 1-73 (MAVFEKVQEI…DLVAYVEEQA (73 aa)). Residue Ser35 is modified to O-(pantetheine 4'-phosphoryl)serine.

It belongs to the acyl carrier protein (ACP) family. In terms of processing, 4'-phosphopantetheine is transferred from CoA to a specific serine of apo-ACP by AcpS. This modification is essential for activity because fatty acids are bound in thioester linkage to the sulfhydryl of the prosthetic group.

The protein resides in the cytoplasm. It functions in the pathway lipid metabolism; fatty acid biosynthesis. In terms of biological role, carrier of the growing fatty acid chain in fatty acid biosynthesis. The sequence is that of Acyl carrier protein from Streptococcus pneumoniae serotype 4 (strain ATCC BAA-334 / TIGR4).